We begin with the raw amino-acid sequence, 200 residues long: Ubiquitin-conjugating enzyme E2 K (200 aa).

Ala-2 carries the N-acetylalanine modification. Residues 4–154 enclose the UBC core domain; sequence IAVQRIKREF…ARLWAHVYAG (151 aa). An N6-acetyllysine; alternate modification is found at Lys-14. Lys-14 is covalently cross-linked (Glycyl lysine isopeptide (Lys-Gly) (interchain with G-Cter in SUMO); alternate). Residue Lys-14 forms a Glycyl lysine isopeptide (Lys-Gly) (interchain with G-Cter in SUMO1); alternate linkage. Cys-92 functions as the Glycyl thioester intermediate in the catalytic mechanism. The residue at position 159 (Ser-159) is a Phosphoserine. The region spanning 160–200 is the UBA domain; it reads PEYTKKIENLCAMGFDRNAVIVALSSKSWDVETATELLLSN.

It belongs to the ubiquitin-conjugating enzyme family. As to quaternary structure, interacts with RNF138/NARF. Interacts with BRCA1. Post-translationally, sumoylation at Lys-14 impairs catalytic activity.

It localises to the cytoplasm. It catalyses the reaction S-ubiquitinyl-[E1 ubiquitin-activating enzyme]-L-cysteine + [E2 ubiquitin-conjugating enzyme]-L-cysteine = [E1 ubiquitin-activating enzyme]-L-cysteine + S-ubiquitinyl-[E2 ubiquitin-conjugating enzyme]-L-cysteine.. It functions in the pathway protein modification; protein ubiquitination. In terms of biological role, accepts ubiquitin from the E1 complex and catalyzes its covalent attachment to other proteins. In vitro, in the presence or in the absence of BRCA1-BARD1 E3 ubiquitin-protein ligase complex, catalyzes the synthesis of 'Lys-48'-linked polyubiquitin chains. Does not transfer ubiquitin directly to but elongates monoubiquitinated substrate protein. Mediates the selective degradation of short-lived and abnormal proteins, such as the endoplasmic reticulum-associated degradation (ERAD) of misfolded lumenal proteins. Ubiquitinates huntingtin. May mediate foam cell formation by the suppression of apoptosis of lipid-bearing macrophages through ubiquitination and subsequence degradation of p53/TP53. Proposed to be involved in ubiquitination and proteolytic processing of NF-kappa-B; in vitro supports ubiquitination of NFKB1. The sequence is that of Ubiquitin-conjugating enzyme E2 K (UBE2K) from Bos taurus (Bovine).